A 303-amino-acid polypeptide reads, in one-letter code: Succinate--CoA ligase [ADP-forming] subunit alpha (303 aa).

CoA-binding positions include 20 to 23 (TGSE), lysine 46, and 108 to 110 (ITE). Substrate is bound at residue tyrosine 173. The active-site Tele-phosphohistidine intermediate is histidine 259.

The protein belongs to the succinate/malate CoA ligase alpha subunit family. As to quaternary structure, heterotetramer of two alpha and two beta subunits.

It carries out the reaction succinate + ATP + CoA = succinyl-CoA + ADP + phosphate. The enzyme catalyses GTP + succinate + CoA = succinyl-CoA + GDP + phosphate. It functions in the pathway carbohydrate metabolism; tricarboxylic acid cycle; succinate from succinyl-CoA (ligase route): step 1/1. Succinyl-CoA synthetase functions in the citric acid cycle (TCA), coupling the hydrolysis of succinyl-CoA to the synthesis of either ATP or GTP and thus represents the only step of substrate-level phosphorylation in the TCA. The alpha subunit of the enzyme binds the substrates coenzyme A and phosphate, while succinate binding and nucleotide specificity is provided by the beta subunit. In Mycobacterium tuberculosis (strain CDC 1551 / Oshkosh), this protein is Succinate--CoA ligase [ADP-forming] subunit alpha.